Reading from the N-terminus, the 497-residue chain is Glycerol kinase (497 aa).

T12 is an ADP binding site. ATP contacts are provided by T12, T13, and S14. T12 is a sn-glycerol 3-phosphate binding site. Residue R16 coordinates ADP. Sn-glycerol 3-phosphate contacts are provided by R82, E83, Y132, and D239. Residues R82, E83, Y132, D239, and Q240 each contribute to the glycerol site. Residues T261 and G303 each coordinate ADP. ATP-binding residues include T261, G303, Q307, and G402. ADP-binding residues include G402 and N406.

Belongs to the FGGY kinase family. As to quaternary structure, homodimer.

The enzyme catalyses glycerol + ATP = sn-glycerol 3-phosphate + ADP + H(+). It participates in polyol metabolism; glycerol degradation via glycerol kinase pathway; sn-glycerol 3-phosphate from glycerol: step 1/1. Functionally, key enzyme in the regulation of glycerol uptake and metabolism. Catalyzes the phosphorylation of glycerol to yield sn-glycerol 3-phosphate. Can utilize other nucleoside triphosphates (GTP, CTP, UTP and ITP) as a phosphoryl donor. The sequence is that of Glycerol kinase from Thermococcus kodakarensis (strain ATCC BAA-918 / JCM 12380 / KOD1) (Pyrococcus kodakaraensis (strain KOD1)).